The sequence spans 71 residues: Hainantoxin-X-2 (71 aa).

The signal sequence occupies residues 1–26 (MKTAIFTVVLALAVFAVLCLVVSTHA). Positions 27–43 (ERHSKTDMEDSPMIQER) are excised as a propeptide. 2 disulfide bridges follow: Cys-52–Cys-65 and Cys-61–Cys-70.

The protein belongs to the neurotoxin 36 family. 02 subfamily. In terms of tissue distribution, expressed by the venom gland.

It is found in the secreted. Functionally, reversibly blocks N-type calcium channels (Cav2.2/CACNA1B) in rat dorsal root ganglion cells. Elicits no toxic symptoms in either vertebrates or invertebrates during a period of 48 hours post-injection, when it was assayed in vivo by direct injection into mice and cockroaches. This is Hainantoxin-X-2 from Cyriopagopus hainanus (Chinese bird spider).